Reading from the N-terminus, the 333-residue chain is 4-hydroxyproline 2-epimerase (333 aa).

C91 functions as the Proton acceptor in the catalytic mechanism. Substrate is bound by residues 92–93 (GH), H225, and D250. Catalysis depends on C254, which acts as the Proton donor. 255–256 (GT) contributes to the substrate binding site.

This sequence belongs to the proline racemase family.

It carries out the reaction trans-4-hydroxy-L-proline = cis-4-hydroxy-D-proline. Functionally, catalyzes the epimerization of trans-4-hydroxy-L-proline (t4LHyp) to cis-4-hydroxy-D-proline (c4DHyp). Is likely involved in a degradation pathway that converts t4LHyp to alpha-ketoglutarate. Displays no proline racemase activity. This is 4-hydroxyproline 2-epimerase from Streptosporangium roseum (strain ATCC 12428 / DSM 43021 / JCM 3005 / KCTC 9067 / NCIMB 10171 / NRRL 2505 / NI 9100).